We begin with the raw amino-acid sequence, 139 residues long: Nucleoside diphosphate kinase (139 aa).

The ATP site is built by lysine 9, phenylalanine 57, arginine 85, threonine 91, arginine 102, and asparagine 112. Histidine 115 serves as the catalytic Pros-phosphohistidine intermediate.

This sequence belongs to the NDK family. In terms of assembly, homotetramer. Requires Mg(2+) as cofactor.

It localises to the cytoplasm. It catalyses the reaction a 2'-deoxyribonucleoside 5'-diphosphate + ATP = a 2'-deoxyribonucleoside 5'-triphosphate + ADP. The enzyme catalyses a ribonucleoside 5'-diphosphate + ATP = a ribonucleoside 5'-triphosphate + ADP. Functionally, major role in the synthesis of nucleoside triphosphates other than ATP. The ATP gamma phosphate is transferred to the NDP beta phosphate via a ping-pong mechanism, using a phosphorylated active-site intermediate. This Desulfosudis oleivorans (strain DSM 6200 / JCM 39069 / Hxd3) (Desulfococcus oleovorans) protein is Nucleoside diphosphate kinase.